The sequence spans 2458 residues: Acetyl-CoA carboxylase 2 (2458 aa).

Position 35 is a phosphoserine (Ser-35). Residues 35–155 (SKSEANLIPS…SPSKEDKKQA (121 aa)) form a disordered region. A compositionally biased stretch (polar residues) spans 51–60 (SDNSGETPQR). Residue Thr-70 is modified to Phosphothreonine. A compositionally biased stretch (basic and acidic residues) spans 77–87 (ASHKGPKDAGR). Phosphoserine occurs at positions 91 and 95. The span at 103–146 (PLSSSDAAPSPELQANGTGTQGLEATDTNGLSSSARPQGQQAGS) shows a compositional bias: polar residues. 5 positions are modified to phosphoserine: Ser-169, Ser-175, Ser-192, Ser-195, and Ser-200. Residues 174–193 (SSDEDSVAGSSRESTRKGSR) form a disordered region. The residue at position 207 (Thr-207) is a Phosphothreonine. Ser-220 carries the phosphoserine modification. A Phosphoserine; by AMPK modification is found at Ser-222. Residues 259 to 761 (VIEKVLIANN…DTGWLDYLIA (503 aa)) form the Biotin carboxylation domain. Residues 414–609 (DDLQQGKRIS…LPAAQLQIAM (196 aa)) enclose the ATP-grasp domain. Residue 458-463 (GGGGKG) participates in ATP binding. A Phosphoserine modification is found at Ser-469. Mg(2+) contacts are provided by Glu-567, Glu-580, and Asn-582. 3 residues coordinate Mn(2+): Glu-567, Glu-580, and Asn-582. Arg-584 is an active-site residue. Thr-753 bears the Phosphothreonine mark. Positions 888-962 (FEKENDPTVL…EAGCVVARLE (75 aa)) constitute a Biotinyl-binding domain. Lys-929 is modified (N6-biotinyllysine). Ser-1340 carries the post-translational modification Phosphoserine. At Thr-1342 the chain carries Phosphothreonine. Ser-1360 and Ser-1405 each carry phosphoserine. Residues 1695 to 2025 (PYVTKDLLQA…DNHSPVPIIT (331 aa)) enclose the CoA carboxyltransferase N-terminal domain. Residues 1695 to 2345 (PYVTKDLLQA…EDQVKQEILQ (651 aa)) form a carboxyltransferase region. CoA-binding residues include Arg-1934, Lys-2238, and Arg-2240. The 317-residue stretch at 2029–2345 (PIDREIEFLP…EDQVKQEILQ (317 aa)) folds into the CoA carboxyltransferase C-terminal domain.

As to quaternary structure, monomer, homodimer, and homotetramer. Forms filamentous polymers. Interacts with MID1IP1; interaction with MID1IP1 promotes oligomerization and increases its activity in a citrate-dependent manner. Biotin is required as a cofactor. The cofactor is Mg(2+). Requires Mn(2+) as cofactor. In terms of processing, the biotin cofactor is covalently attached to the central biotinyl-binding domain and is required for the catalytic activity. Phosphorylation at Ser-222 by AMPK inactivates the enzyme. Required for the maintenance of skeletal muscle lipid and glucose homeostasis. As to expression, widely expressed with highest levels in heart, skeletal muscle, liver, adipose tissue, mammary gland, adrenal gland and colon. Isoform 3 is expressed in skeletal muscle, adipose tissue and liver (at protein level). Isoform 3 is detected at high levels in adipose tissue with lower levels in heart, liver, skeletal muscle and testis.

It localises to the mitochondrion. The catalysed reaction is hydrogencarbonate + acetyl-CoA + ATP = malonyl-CoA + ADP + phosphate + H(+). It participates in lipid metabolism; malonyl-CoA biosynthesis; malonyl-CoA from acetyl-CoA: step 1/1. Its activity is regulated as follows. Activity is increased by oligomerization of the protein into filaments. The oligomerization and the activity of the enzyme are inhibited by phosphorylation at Ser-222. Inhibited by its product, malonyl-CoA. Activated by citrate. Activation by MID1IP1 is citrate-dependent. Soraphen A, inhibits the enzyme by preventing the formation of active filamentous oligomers. Functionally, mitochondrial enzyme that catalyzes the carboxylation of acetyl-CoA to malonyl-CoA and plays a central role in fatty acid metabolism. Catalyzes a 2 steps reaction starting with the ATP-dependent carboxylation of the biotin carried by the biotin carboxyl carrier (BCC) domain followed by the transfer of the carboxyl group from carboxylated biotin to acetyl-CoA. Through the production of malonyl-CoA that allosterically inhibits carnitine palmitoyltransferase 1 at the mitochondria, negatively regulates fatty acid oxidation. Together with its cytosolic isozyme ACACA, which is involved in de novo fatty acid biosynthesis, promotes lipid storage. This chain is Acetyl-CoA carboxylase 2, found in Homo sapiens (Human).